The primary structure comprises 422 residues: PHAF1 protein T01G9.2 (422 aa).

Belongs to the PHAF1 family.

It is found in the cytoplasm. The protein resides in the preautophagosomal structure. Functionally, may play a regulatory role in autophagic activity. In Caenorhabditis elegans, this protein is PHAF1 protein T01G9.2.